A 287-amino-acid polypeptide reads, in one-letter code: Mitochondrial glycine transporter A (287 aa).

3 Solcar repeats span residues 7–97 (HPAV…LKQR), 104–188 (PGPL…TKHL), and 198–282 (YAPV…LMAQ). 6 helical membrane passes run 13-38 (FMCG…TRLQ), 72-98 (GVSP…KQRY), 110-135 (VLLG…TRFE), 163-186 (GLMA…SQTK), 202-228 (ANFS…KTHI), and 257-275 (GAVP…AWTV).

This sequence belongs to the mitochondrial carrier (TC 2.A.29) family. SLC25A38 subfamily. As to expression, at 24 hours post-fertilization, expressed predominantly in posterior blood island, posterior cardinal vein and circulating blood, as well as in somites, brain and retina. At 34 hours post-fertilization, becomes restricted to posterior blood island and circulating blood.

It is found in the mitochondrion inner membrane. It catalyses the reaction glycine(in) = glycine(out). Functionally, mitochondrial glycine transporter that imports glycine into the mitochondrial matrix. Plays an important role in providing glycine for the first enzymatic step in heme biosynthesis, the condensation of glycine with succinyl-CoA to produce 5-aminolevulinate (ALA) in the mitochondrial matrix. Required during erythropoiesis. Its function is as follows. May play a role as pro-apoptotic protein that induces caspase-dependent apoptosis. This Danio rerio (Zebrafish) protein is Mitochondrial glycine transporter A (slc25a38a).